We begin with the raw amino-acid sequence, 899 residues long: Suppressor of glycerol defect protein 1 (899 aa).

The segment covering 24 to 33 (QDERFSISEG) has biased composition (basic and acidic residues). 2 disordered regions span residues 24-181 (QDER…VSYP) and 248-326 (ETNS…DDSE). Over residues 34-49 (KKRRRGNGKHLSRKEK) the composition is skewed to basic residues. Positions 65–77 (REINSSRLKSAPT) are enriched in polar residues. Acidic residues predominate over residues 103–126 (DESESNENWDSDEVLTDEVAEESG). 3 stretches are compositionally biased toward basic and acidic residues: residues 134 to 143 (ETMKKLESLK), 162 to 174 (SYEK…RDTN), and 251 to 264 (SMRK…KAFS). Residues 265–292 (SDDDLSASDFEDSDGLSESDNDSVADSD) are compositionally biased toward acidic residues. The MIF4G domain maps to 335-540 (SKKVNSSLNK…DTMSDLKNNR (206 aa)). The 138-residue stretch at 644–781 (DIRRAIFISI…KLDVFKHVPF (138 aa)) folds into the MI domain. The residue at position 736 (Ser-736) is a Phosphoserine.

The protein belongs to the CWC22 family. As to quaternary structure, interacts with PLC1.

It localises to the nucleus. The protein resides in the nucleolus. Involved in osmoregulatory glycerol response, probably through its interaction with PLC1 which regulates the expression of GDP1. The protein is Suppressor of glycerol defect protein 1 (SGD1) of Saccharomyces cerevisiae (strain ATCC 204508 / S288c) (Baker's yeast).